We begin with the raw amino-acid sequence, 355 residues long: MNTTPVHALTDIDGGIAVDPAPRLAGPPVFGGPGNAAFDLVPVRSTGRETLRFDFPGVSVGSAHYEEGPTGATVIHIPAGARTAVDARGGAVGLSGGYDFNHAICLAGGASYGLEAGAGVSGALLERLEYRTGFAEAQLVSSAVIYDFSARSTAVYPDKALGRAALEFAVPGEFPQGRAGAGMSASAGKVDWDRTEITGQGAAFRRLGDVRILAVVVPNPVGVIMDRAGGIVRGNYDAQTGVRRHPVFDYQEAFAEQLPPVTQAGNTTISAIVTNVRMSPVELNQFAKQVHSSMHRGIQPFHTDMDGDTLFAVTTDEIDLPTTPGSSRGRLSVNATALGAIASEVMWDAVLEAAK.

Threonine 267 functions as the Nucleophile in the catalytic mechanism.

Belongs to the peptidase S58 family. As to quaternary structure, heterotetramer composed of 4 alpha/beta heterodimers. Post-translationally, expressed as an inactive precursor that is cleaved autocatalytically at Asn266/Thr267 to generate an active enzyme composed of an alpha subunit and a beta subunit.

The enzyme catalyses [N-(6-aminohexanoyl)]n + H2O = [N-(6-aminohexanoyl)]n-x + [N-(6-aminohexanoyl)]x.. It participates in xenobiotic degradation; nylon-6 oligomer degradation. Involved in the degradation of nylon-6 oligomers. Degrades cyclic and linear oligomers of 6-aminohexanoate (Ahx) with a degree of polymerization greater than three by an endo-type mode. Cannot use Ahx cyclic dimer or the Ahx linear dimer. The polypeptide is 6-aminohexanoate-oligomer endohydrolase (Kocuria sp. (strain KY2)).